Reading from the N-terminus, the 350-residue chain is Sterol-4-alpha-carboxylate 3-dehydrogenase ERG26, decarboxylating (350 aa).

NADP(+) contacts are provided by residues 12–18, 63–64, and 85–87; these read GGSGFLG, DL, and SAS. Residues serine 125 and tyrosine 152 each contribute to the substrate site. NADP(+) contacts are provided by residues tyrosine 152, lysine 156, and 179–182; that span reads PAGI. The active-site Proton donor is the lysine 156.

This sequence belongs to the 3-beta-HSD family. As to quaternary structure, heterotetramer of ERG25, ERG26, ERG27 and ERG28. ERG28 acts as a scaffold to tether ERG27 and other 4,4-demethylation-related enzymes, forming a demethylation enzyme complex, in the endoplasmic reticulum.

It localises to the endoplasmic reticulum membrane. It carries out the reaction 4beta-methylzymosterol-4alpha-carboxylate + NADP(+) = 3-dehydro-4-methylzymosterol + CO2 + NADPH. It functions in the pathway steroid biosynthesis; zymosterol biosynthesis; zymosterol from lanosterol: step 4/6. Sterol-4-alpha-carboxylate 3-dehydrogenase; part of the third module of ergosterol biosynthesis pathway that includes the late steps of the pathway. ERG26 is a catalytic component of the C-4 demethylation complex that catalyzes the oxidative decarboxylation that results in a reduction of the 3-beta-hydroxy group at the C-3 carbon to an oxo group. The third module or late pathway involves the ergosterol synthesis itself through consecutive reactions that mainly occur in the endoplasmic reticulum (ER) membrane. Firstly, the squalene synthase ERG9 catalyzes the condensation of 2 farnesyl pyrophosphate moieties to form squalene, which is the precursor of all steroids. Squalene synthase is crucial for balancing the incorporation of farnesyl diphosphate (FPP) into sterol and nonsterol isoprene synthesis. Secondly, the squalene epoxidase ERG1 catalyzes the stereospecific oxidation of squalene to (S)-2,3-epoxysqualene, which is considered to be a rate-limiting enzyme in steroid biosynthesis. Then, the lanosterol synthase ERG7 catalyzes the cyclization of (S)-2,3 oxidosqualene to lanosterol, a reaction that forms the sterol core. In the next steps, lanosterol is transformed to zymosterol through a complex process involving various demethylation, reduction and desaturation reactions. The lanosterol 14-alpha-demethylase ERG11 (also known as CYP51) catalyzes C14-demethylation of lanosterol to produce 4,4'-dimethyl cholesta-8,14,24-triene-3-beta-ol, which is critical for ergosterol biosynthesis. The C-14 reductase ERG24 reduces the C14=C15 double bond of 4,4-dimethyl-cholesta-8,14,24-trienol to produce 4,4-dimethyl-cholesta-8,24-dienol. 4,4-dimethyl-cholesta-8,24-dienol is substrate of the C-4 demethylation complex ERG25-ERG26-ERG27 in which ERG25 catalyzes the three-step monooxygenation required for the demethylation of 4,4-dimethyl and 4alpha-methylsterols, ERG26 catalyzes the oxidative decarboxylation that results in a reduction of the 3-beta-hydroxy group at the C-3 carbon to an oxo group, and ERG27 is responsible for the reduction of the keto group on the C-3. ERG28 has a role as a scaffold to help anchor ERG25, ERG26 and ERG27 to the endoplasmic reticulum and ERG29 regulates the activity of the iron-containing C4-methylsterol oxidase ERG25. Then, the sterol 24-C-methyltransferase ERG6 catalyzes the methyl transfer from S-adenosyl-methionine to the C-24 of zymosterol to form fecosterol. The C-8 sterol isomerase ERG2 catalyzes the reaction which results in unsaturation at C-7 in the B ring of sterols and thus converts fecosterol to episterol. The sterol-C5-desaturase ERG3 then catalyzes the introduction of a C-5 double bond in the B ring to produce 5-dehydroepisterol. The C-22 sterol desaturase ERG5 further converts 5-dehydroepisterol into ergosta-5,7,22,24(28)-tetraen-3beta-ol by forming the C-22(23) double bond in the sterol side chain. Finally, ergosta-5,7,22,24(28)-tetraen-3beta-ol is substrate of the C-24(28) sterol reductase ERG4 to produce ergosterol. This Candida albicans (strain SC5314 / ATCC MYA-2876) (Yeast) protein is Sterol-4-alpha-carboxylate 3-dehydrogenase ERG26, decarboxylating.